We begin with the raw amino-acid sequence, 576 residues long: Non-neuronal cytoplasmic intermediate filament protein (576 aa).

Positions 1 to 51 (MTSKISTTYEEEGRQSKIQPRAFVITRSGPSSKSSSFSARQSYASSRQSIT) are disordered. The segment at 2-75 (TSKISTTYEE…FRGTREKEKR (74 aa)) is head. The segment covering 28–49 (SGPSSKSSSFSARQSYASSRQS) has biased composition (low complexity). The IF rod domain occupies 73–425 (EKREMQNLNE…KLLEGEESRV (353 aa)). The interval 76–108 (EMQNLNERLASYIEKVHFLDAQVKKLEAENEAL) is coil 1A. The interval 109-122 (RNRKSESLQPIRDA) is linker 1. Positions 123–260 (YENELAQARK…DLLDQLELLK (138 aa)) are coil 1B. Residues 261 to 278 (PEPIQIKGMDYAEFWKSE) form a linker 2 region. The segment at 279-425 (LSKCVREIQS…KLLEGEESRV (147 aa)) is coil 2. Residues 426–576 (GLRSLVEQAI…KATLIAKFSG (151 aa)) form a tail region. Positions 456 to 574 (GSMTIQRSSK…NEKATLIAKF (119 aa)) constitute an LTD domain.

This sequence belongs to the intermediate filament family. Can form homopolymers.

It localises to the cytoplasm. The polypeptide is Non-neuronal cytoplasmic intermediate filament protein (Cornu aspersum (Brown garden snail)).